A 149-amino-acid chain; its full sequence is UPF0336 protein CMM_2793 (149 aa).

One can recognise a MaoC-like domain in the interval 16–117 (APYLVGREKV…TVTKVATLGG (102 aa)).

The protein belongs to the UPF0336 family.

The protein is UPF0336 protein CMM_2793 of Clavibacter michiganensis subsp. michiganensis (strain NCPPB 382).